The sequence spans 356 residues: Dual-specificity RNA methyltransferase RlmN (356 aa).

Residue E89 is the Proton acceptor of the active site. In terms of domain architecture, Radical SAM core spans 108-341 (SHARYTICVS…CTIRESKGLD (234 aa)). A disulfide bridge links C115 with C346. Positions 122, 126, and 129 each coordinate [4Fe-4S] cluster. S-adenosyl-L-methionine-binding positions include 172–173 (GE), S204, 227–229 (SLH), and N303. C346 (S-methylcysteine intermediate) is an active-site residue.

The protein belongs to the radical SAM superfamily. RlmN family. [4Fe-4S] cluster is required as a cofactor.

The protein resides in the cytoplasm. It carries out the reaction adenosine(2503) in 23S rRNA + 2 reduced [2Fe-2S]-[ferredoxin] + 2 S-adenosyl-L-methionine = 2-methyladenosine(2503) in 23S rRNA + 5'-deoxyadenosine + L-methionine + 2 oxidized [2Fe-2S]-[ferredoxin] + S-adenosyl-L-homocysteine. The catalysed reaction is adenosine(37) in tRNA + 2 reduced [2Fe-2S]-[ferredoxin] + 2 S-adenosyl-L-methionine = 2-methyladenosine(37) in tRNA + 5'-deoxyadenosine + L-methionine + 2 oxidized [2Fe-2S]-[ferredoxin] + S-adenosyl-L-homocysteine. In terms of biological role, specifically methylates position 2 of adenine 2503 in 23S rRNA and position 2 of adenine 37 in tRNAs. m2A2503 modification seems to play a crucial role in the proofreading step occurring at the peptidyl transferase center and thus would serve to optimize ribosomal fidelity. The sequence is that of Dual-specificity RNA methyltransferase RlmN from Campylobacter jejuni subsp. jejuni serotype O:2 (strain ATCC 700819 / NCTC 11168).